The following is a 460-amino-acid chain: Decaprenylphosphoryl-beta-D-ribose oxidase (460 aa).

An FAD-binding PCMH-type domain is found at 19-193; sequence TAPTVASVLS…LRATIEMTPT (175 aa). FAD-binding positions include 52-62, Gly116, 121-124, 128-131, Ile183, and Tyr414; these read ARGLGRSYGDN, TVGG, and CDIH.

The protein belongs to the DprE1 family. In terms of assembly, monomer. Interacts with DprE2 to form an epimerase complex.

Its subcellular location is the periplasm. The enzyme catalyses trans,octa-cis-decaprenylphospho-beta-D-ribofuranose + FAD + H(+) = trans,octa-cis-decaprenylphospho-beta-D-erythro-pentofuranosid-2-ulose + FADH2. It participates in cell wall biogenesis; cell wall polysaccharide biosynthesis. Its activity is regulated as follows. Is inhibited by 8-nitro-benzothiazinones (BTZs) such as BTZ043; BTZs are a new class of antimycobacterial agents that block formation of both cell-wall lipoarabinomannan and arabinogalactan via inhibition of decaprenyl-phospho-arabinose (DPA) synthesis. BTZs are suicide inhibitors that act via covalent modification of DprE1; the essential nitro group of these compounds is reduced by DprE1 to a nitroso group, which then specifically reacts with Cys-386 of DprE1 to form an irreversible semimercaptal adduct. Other compounds with diverse scaffolds (dinitrobenzamides and nitrobenzoquinoxalines) also act as covalent DprE1 inhibitors. Functionally, component of the DprE1-DprE2 complex that catalyzes the 2-step epimerization of decaprenyl-phospho-ribose (DPR) to decaprenyl-phospho-arabinose (DPA), a key precursor that serves as the arabinose donor required for the synthesis of cell-wall arabinans. DprE1 catalyzes the first step of epimerization, namely FAD-dependent oxidation of the C2' hydroxyl of DPR to yield the keto intermediate decaprenyl-phospho-2'-keto-D-arabinose (DPX). The intermediate DPX is then transferred to DprE2 subunit of the epimerase complex, most probably through a 'substrate channel' at the interface of DprE1-DprE2 complex. Can also use farnesyl-phosphoryl-beta-D-ribofuranose (FPR) as substrate in vitro. Appears to be essential for the growth of M.smegmatis. The polypeptide is Decaprenylphosphoryl-beta-D-ribose oxidase (Mycolicibacterium smegmatis (strain ATCC 700084 / mc(2)155) (Mycobacterium smegmatis)).